Consider the following 802-residue polypeptide: E3 ubiquitin-protein ligase RNF10 (802 aa).

3 stretches are compositionally biased toward low complexity: residues 1 to 31 (MPQS…SGSS), 78 to 90 (SNQS…QKSK), and 104 to 113 (SKPFSSSSNG). Residues 1 to 134 (MPQSSPSTAA…AEFSPAQFSG (134 aa)) are disordered. At Ser-5 the chain carries Phosphoserine. Ser-110 is modified (phosphoserine). Over residues 114-124 (GRRDEVAEAQR) the composition is skewed to basic and acidic residues. Ser-128 is subject to Phosphoserine. An RING-type zinc finger spans residues 225 to 267 (CPICLYPPTAAKITRCGHIFCWACILHYLSLSERTWSKCPICY). Residues 645–654 (DSALGPTSTE) are compositionally biased toward polar residues. Disordered regions lie at residues 645 to 664 (DSAL…LSPL), 716 to 753 (DGWP…VPSF), and 767 to 802 (KLDT…VHTK). Residues 716-728 (DGWPKAAPKKDDN) show a composition bias toward basic and acidic residues. Residues 793-802 (LFSTSVVHTK) are compositionally biased toward polar residues.

Belongs to the RNF10 family. Interacts with MEOX2.

Its subcellular location is the cytoplasm. The protein localises to the nucleus. The enzyme catalyses S-ubiquitinyl-[E2 ubiquitin-conjugating enzyme]-L-cysteine + [acceptor protein]-L-lysine = [E2 ubiquitin-conjugating enzyme]-L-cysteine + N(6)-ubiquitinyl-[acceptor protein]-L-lysine.. It functions in the pathway protein modification; protein ubiquitination. Its function is as follows. E3 ubiquitin-protein ligase that catalyzes monoubiquitination of 40S ribosomal proteins RPS2/us5 and RPS3/us3 in response to ribosome stalling. Part of a ribosome quality control that takes place when ribosomes have stalled during translation initiation (iRQC): RNF10 acts by mediating monoubiquitination of RPS2/us5 and RPS3/us3, promoting their degradation by the proteasome. Also promotes ubiquitination of 40S ribosomal proteins in response to ribosome stalling during translation elongation. The action of RNF10 in iRQC is counteracted by USP10. May also act as a transcriptional factor involved in the regulation of MAG (Myelin-associated glycoprotein) expression. Acts as a regulator of Schwann cell differentiation and myelination. This is E3 ubiquitin-protein ligase RNF10 from Rattus norvegicus (Rat).